The sequence spans 371 residues: Uroporphyrinogen decarboxylase (371 aa).

Positions 1 to 14 (MARWATMSTETTGT) are enriched in polar residues. The interval 1–30 (MARWATMSTETTGTGARDEGPRPGDPADSP) is disordered. Substrate is bound by residues 49–53 (RQAGR), Asp98, Tyr173, Ser228, and His342.

Belongs to the uroporphyrinogen decarboxylase family. As to quaternary structure, homodimer.

It localises to the cytoplasm. The catalysed reaction is uroporphyrinogen III + 4 H(+) = coproporphyrinogen III + 4 CO2. The protein operates within porphyrin-containing compound metabolism; protoporphyrin-IX biosynthesis; coproporphyrinogen-III from 5-aminolevulinate: step 4/4. Catalyzes the decarboxylation of four acetate groups of uroporphyrinogen-III to yield coproporphyrinogen-III. The chain is Uroporphyrinogen decarboxylase from Salinispora tropica (strain ATCC BAA-916 / DSM 44818 / JCM 13857 / NBRC 105044 / CNB-440).